A 492-amino-acid polypeptide reads, in one-letter code: RNA helicase CrhR (492 aa).

The Q motif motif lies at 7-35; sequence STFADLGLSEKRCQLLADIGFEAPTQIQT. The Helicase ATP-binding domain maps to 38–207; the sequence is IPLLLSGRDM…NQFLNDPALV (170 aa). ATP is bound at residue 51 to 58; sequence SQTGTGKT. The DEAD box signature appears at 155–158; the sequence is DEAD. In terms of domain architecture, Helicase C-terminal spans 234-379; the sequence is KALQPILEME…VCTIPNRSQV (146 aa). The tract at residues 451–492 is disordered; it reads VLRRGRNAGGGQNKSGGGYQGKPGKPRRSSGGRRPAYSDRQQ. Residues 457–471 are compositionally biased toward gly residues; sequence NAGGGQNKSGGGYQG.

The protein belongs to the DEAD box helicase family.

It is found in the cytoplasm. It localises to the cell inner membrane. Its subcellular location is the cellular thylakoid membrane. The catalysed reaction is ATP + H2O = ADP + phosphate + H(+). Its activity is regulated as follows. Helicase inhibited by the slowly-hydrolyzing ATP analog ATP-gamma-S. Protein is rapidly degraded upon shifting from 20 to 30 degrees Celsius, the degradation machinery is only transiently present in cells grown at 30 degrees Celsius, is inhibited by commercial protease inhibitors and requires full-length protein expression (the N-terminal fragment does not induce proteolysis although it can be degraded by wild-type extract). Its function is as follows. An ATP-dependent bidirectional RNA helicase with RNA-dependent ATPase activity; does not unwind dsDNA, uses only (d)ATP. Also has ATP-dependent RNA annealing activity; concurrent annealing and helicase activity promote strand-exchange activity. In vitro has low helicase processivity, annealing processivity is probably higher. Required for correct cold adaptation, probably by aiding translation of mRNAs required for photosynthesis and electron transport. Probably regulates the cold-shock-inducible expression of the GroESL chaperones. May partially regulate its own expression at both the transcriptional and post-transcriptional level (experiments used a construct expressing a 25 kDa trunacted protein which might have dominant-negative effects); is probably not directly involved in the pathway responsible for mRNA degradation. This chain is RNA helicase CrhR, found in Synechocystis sp. (strain ATCC 27184 / PCC 6803 / Kazusa).